The following is a 557-amino-acid chain: E3 ubiquitin-protein ligase ARIH1 (557 aa).

Residues 1–47 (MDSDEGYNYEFDEDEECSEEDSGAEEEEDEDDDEPDDDTLDLGEVEL) are compositionally biased toward acidic residues. Residues 1–95 (MDSDEGYNYE…GGGGGPGHEQ (95 aa)) are disordered. The segment covering 65 to 92 (ETGGGGGSALGPGGGGGGGGGGGGGGPG) has biased composition (gly residues). Residues 105 to 153 (TAEQILQHMVECIREVNEVIQNPATITRILLSHFNWDKEKLMERYFDGN) are UBA-like. N6-acetyllysine is present on K142. The TRIAD supradomain stretch occupies residues 182–393 (QDMPCQICYL…SAWYNCNRYN (212 aa)). Positions 186, 189, 203, 205, 208, 211, 231, 236, 276, 281, 297, 299, 304, 307, 312, 317, 344, and 347 each coordinate Zn(2+). An RING-type 1 zinc finger spans residues 186 to 236 (CQICYLNYPNSYFTGLECGHKFCMQCWSEYLTTKIMEEGMGQTISCPAHGC). The segment at 256–317 (LKYQHLITNS…GENWHDPVKC (62 aa)) adopts an IBR-type zinc-finger fold. The RING-type 2; atypical zinc-finger motif lies at 344-375 (CPKCHVTIEKDGGCNHMVCRNQNCKAEFCWVC). C357 is an active-site residue. Residues C362, C367, C372, C375, H382, and C389 each coordinate Zn(2+). Residues 408 to 557 (RAALQRYLFY…EKDLWEYIED (150 aa)) are ariadne domain.

The protein belongs to the RBR family. Ariadne subfamily. In terms of assembly, interacts (via the first RING-type zinc finger) with UBE2L3. Associates with cullin-RING ubiquitin ligase (CRL) complexes containing CUL1, CUL2 and CUL3. Interacts with neddylated CUL1. Interacts with neddylated CUL2. Interacts with neddylated CUL3. Interacts with neddylated CUL4A. As to expression, widely expressed.

The protein localises to the cytoplasm. Its subcellular location is the nucleus. It is found in the cajal body. It catalyses the reaction [E2 ubiquitin-conjugating enzyme]-S-ubiquitinyl-L-cysteine + [acceptor protein]-L-lysine = [E2 ubiquitin-conjugating enzyme]-L-cysteine + [acceptor protein]-N(6)-ubiquitinyl-L-lysine.. It participates in protein modification; protein ubiquitination. With respect to regulation, autoinhibited by the ariadne domain, which masks the second RING-type zinc finger that contains the active site and inhibits the E3 activity. Inhibition is relieved upon binding to neddylated cullin-RING ubiquitin ligase complexes, which activate the E3 ligase activity of ARIH1. In terms of biological role, E3 ubiquitin-protein ligase, which catalyzes ubiquitination of target proteins together with ubiquitin-conjugating enzyme E2 UBE2L3. Acts as an atypical E3 ubiquitin-protein ligase by working together with cullin-RING ubiquitin ligase (CRL) complexes and initiating ubiquitination of CRL substrates: associates with CRL complexes and specifically mediates addition of the first ubiquitin on CRLs targets. The initial ubiquitin is then elongated by CDC34/UBE2R1 and UBE2R2. E3 ubiquitin-protein ligase activity is activated upon binding to neddylated cullin-RING ubiquitin ligase complexes. Plays a role in protein translation in response to DNA damage by mediating ubiquitination of EIF4E2, the consequences of EIF4E2 ubiquitination are however unclear. According to a report, EIF4E2 ubiquitination leads to promote EIF4E2 cap-binding and protein translation arrest. According to another report EIF4E2 ubiquitination leads to its subsequent degradation. Acts as the ligase involved in ISGylation of EIF4E2. In vitro, controls the degradation of the LINC (LInker of Nucleoskeleton and Cytoskeleton) complex member SUN2 and may therefore have a role in the formation and localization of the LINC complex, and as a consequence, nuclear subcellular localization and nuclear morphology. This is E3 ubiquitin-protein ligase ARIH1 from Homo sapiens (Human).